The primary structure comprises 375 residues: Glutamate 5-kinase (375 aa).

Lys-3 is a binding site for ATP. Residues Ser-44, Asp-131, and Asn-143 each coordinate substrate. ATP contacts are provided by residues 163–164 and 205–211; these read SD and TGGMVTK. The 78-residue stretch at 269-346 folds into the PUA domain; it reads EGTLWVDDGA…GDIEALLGYR (78 aa).

Belongs to the glutamate 5-kinase family.

The protein resides in the cytoplasm. It carries out the reaction L-glutamate + ATP = L-glutamyl 5-phosphate + ADP. It participates in amino-acid biosynthesis; L-proline biosynthesis; L-glutamate 5-semialdehyde from L-glutamate: step 1/2. In terms of biological role, catalyzes the transfer of a phosphate group to glutamate to form L-glutamate 5-phosphate. The polypeptide is Glutamate 5-kinase (Rhodospirillum rubrum (strain ATCC 11170 / ATH 1.1.1 / DSM 467 / LMG 4362 / NCIMB 8255 / S1)).